A 363-amino-acid chain; its full sequence is Protein MAK32 (363 aa).

To S.pombe SpAC4G8.14c.

Functionally, necessary for the structural stability of L-A double-stranded RNA-containing particles. Necessary for growth at 37 degrees Celsius as well as for maintenance of the killer plasmid. In Saccharomyces cerevisiae (strain ATCC 204508 / S288c) (Baker's yeast), this protein is Protein MAK32 (MAK32).